A 228-amino-acid chain; its full sequence is Vesicle transport protein SEC20 (228 aa).

Over Met1–Leu199 the chain is Cytoplasmic. Residues Leu37–Ser90 are a coiled coil. A helical; Anchor for type IV membrane protein membrane pass occupies residues Thr200–Val220. Over Lys221–Leu228 the chain is Lumenal.

It belongs to the SEC20 family. Component of a SNARE complex consisting of STX18, USE1L, BNIP1/SEC20L and SEC22B. Interacts directly with STX18, RINT1/TIP20L and NAPA. Interacts with ZW10 through RINT1. Interacts with BCL2. Interacts with RNF186. Interacts with RNF185. Interacts with SQSTM1; increased by 'Lys-63'-linked polyubiquitination of BNIP1. Post-translationally, polyubiquitinated. 'Lys-63'-linked polyubiquitination by RNF185 increases the interaction with the autophagy receptor SQSTM1. Undergoes 'Lys-29'- and 'Lys-63'-linked polyubiquitination by RNF186 that may regulate BNIP1 localization to the mitochondrion.

It is found in the endoplasmic reticulum membrane. The protein resides in the mitochondrion membrane. Its function is as follows. As part of a SNARE complex may be involved in endoplasmic reticulum membranes fusion and be required for the maintenance of endoplasmic reticulum organization. Also plays a role in apoptosis. It is for instance required for endoplasmic reticulum stress-induced apoptosis. As a substrate of RNF185 interacting with SQSTM1, might also be involved in mitochondrial autophagy. This chain is Vesicle transport protein SEC20, found in Rattus norvegicus (Rat).